The following is a 301-amino-acid chain: Small ribosomal subunit protein uS2 (301 aa).

Belongs to the universal ribosomal protein uS2 family. Component of the small ribosomal subunit. Mature ribosomes consist of a small (40S) and a large (60S) subunit. The 40S subunit contains about 33 different proteins and 1 molecule of RNA (18S). The 60S subunit contains about 49 different proteins and 3 molecules of RNA (25S, 5.8S and 5S). Interacts with RPS21.

It is found in the cytoplasm. Functionally, required for the assembly and/or stability of the 40S ribosomal subunit. Required for the processing of the 20S rRNA-precursor to mature 18S rRNA in a late step of the maturation of 40S ribosomal subunits. This chain is Small ribosomal subunit protein uS2, found in Ajellomyces dermatitidis (strain ER-3 / ATCC MYA-2586) (Blastomyces dermatitidis).